Reading from the N-terminus, the 273-residue chain is Tryptophan synthase alpha chain (273 aa).

Catalysis depends on proton acceptor residues E56 and D67.

Belongs to the TrpA family. As to quaternary structure, tetramer of two alpha and two beta chains.

It carries out the reaction (1S,2R)-1-C-(indol-3-yl)glycerol 3-phosphate + L-serine = D-glyceraldehyde 3-phosphate + L-tryptophan + H2O. Its pathway is amino-acid biosynthesis; L-tryptophan biosynthesis; L-tryptophan from chorismate: step 5/5. The alpha subunit is responsible for the aldol cleavage of indoleglycerol phosphate to indole and glyceraldehyde 3-phosphate. This Shewanella baltica (strain OS185) protein is Tryptophan synthase alpha chain.